Consider the following 35-residue polypeptide: SDPKIGDGCFGLPLDHIGSVSGLGCNRPVQNRPKK.

Cysteines 9 and 25 form a disulfide.

As to expression, expressed by the venom gland.

The protein resides in the secreted. In terms of biological role, snake venom natriuretic peptide that exhibits vasoactive and probable hypotensive activity. Is only weakly active on natriuretic peptide receptor-C (NPR3). Stimulates cGMP production through the natriuretic peptide receptor 1 (NPR1) with moderate potencies for the rat NPR1 (EC(50)=1200 nM), and very weak potencies over human NPR1 (30% activation at 10 uM). In vivo, does not impact systolic and diastolic blood pressure, as well as heart rate, when intravenously injected in conscious rabbits. Does not affect the bradycardia due to cardiac afferent stimulation (Bezold-Jarisch reflex). The sequence is that of Natriuretic peptide TNPb from Oxyuranus microlepidotus (Inland taipan).